A 954-amino-acid polypeptide reads, in one-letter code: Kinesin-like protein KIN-14A (954 aa).

A Calponin-homology (CH) domain is found at 24 to 142 (ALRRHQAATW…CVISLKSYHE (119 aa)). A coiled-coil region spans residues 242-293 (LSRQLEKEQSSNSQVENRRRLLQAQESELLELKSMFQEVKIDFRTLKTQFQD). The region spanning 332 to 651 (NIRVFCRIRP…LKFAQRASCV (320 aa)) is the Kinesin motor domain. Residue 413–420 (GQTGSGKT) coordinates ATP. A coiled-coil region spans residues 656-692 (AHANKESNEIRELKEQVENLKRALAAKELEKSSFKLK). Residues 697 to 709 (VRERAKQVPERTP) show a composition bias toward basic and acidic residues. Disordered regions lie at residues 697–743 (VRER…TKLN), 824–858 (NLEV…RKSI), and 882–954 (PAKI…KRWL). Composition is skewed to polar residues over residues 831–849 (DEPS…NATK) and 886–898 (ANST…SSIT).

This sequence belongs to the TRAFAC class myosin-kinesin ATPase superfamily. Kinesin family. KIN-14 subfamily.

This chain is Kinesin-like protein KIN-14A, found in Oryza sativa subsp. japonica (Rice).